Reading from the N-terminus, the 740-residue chain is Ethylene receptor 1 (740 aa).

Helical transmembrane passes span 23–43 (ISDF…IYFV), 53–73 (WVLV…LINL), and 92–112 (VLTA…IPDL). Residues C65 and H69 each contribute to the Cu cation site. One can recognise a GAF domain in the interval 158–307 (DRHTILKTTL…VVADQVAVAL (150 aa)). The region spanning 350 to 588 (VMNHEMRTPM…TFIVKLGIAE (239 aa)) is the Histidine kinase domain. H353 is subject to Phosphohistidine; by autocatalysis. Residues 614–731 (KVLVMDDNGV…KMRSVLSELI (118 aa)) form the Response regulatory domain. D662 carries the post-translational modification 4-aspartylphosphate.

This sequence belongs to the ethylene receptor family. Homodimer; disulfide-linked. Cu cation serves as cofactor. Activation probably requires a transfer of a phosphate group between a His in the transmitter domain and an Asp of the receiver domain.

The protein resides in the endoplasmic reticulum membrane. It carries out the reaction ATP + protein L-histidine = ADP + protein N-phospho-L-histidine.. Functionally, may act early in the ethylene signal transduction pathway, possibly as an ethylene receptor, or as a regulator of the pathway. The polypeptide is Ethylene receptor 1 (ETR1) (Cucumis sativus (Cucumber)).